A 403-amino-acid polypeptide reads, in one-letter code: Histidine decarboxylase (403 aa).

Residue H120 coordinates substrate. K233 is subject to N6-(pyridoxal phosphate)lysine.

It belongs to the group II decarboxylase family. As to quaternary structure, homotetramer. It depends on pyridoxal 5'-phosphate as a cofactor.

It carries out the reaction L-histidine + H(+) = histamine + CO2. The protein is Histidine decarboxylase of Pseudomonas entomophila (strain L48).